We begin with the raw amino-acid sequence, 586 residues long: Clathrin heavy chain linker domain-containing protein 1 (586 aa).

Residues Met174–Gln232 adopt a coiled-coil conformation.

In Macaca fascicularis (Crab-eating macaque), this protein is Clathrin heavy chain linker domain-containing protein 1 (CLHC1).